A 325-amino-acid polypeptide reads, in one-letter code: Beta-ketoacyl-[acyl-carrier-protein] synthase III (325 aa).

Active-site residues include Cys119 and His252. The segment at 253-257 is ACP-binding; the sequence is QANIR. The active site involves Asn282.

It belongs to the thiolase-like superfamily. FabH family. As to quaternary structure, homodimer.

The protein resides in the cytoplasm. It carries out the reaction malonyl-[ACP] + acetyl-CoA + H(+) = 3-oxobutanoyl-[ACP] + CO2 + CoA. It participates in lipid metabolism; fatty acid biosynthesis. Its function is as follows. Catalyzes the condensation reaction of fatty acid synthesis by the addition to an acyl acceptor of two carbons from malonyl-ACP. Catalyzes the first condensation reaction which initiates fatty acid synthesis and may therefore play a role in governing the total rate of fatty acid production. Possesses both acetoacetyl-ACP synthase and acetyl transacylase activities. Its substrate specificity determines the biosynthesis of branched-chain and/or straight-chain of fatty acids. The protein is Beta-ketoacyl-[acyl-carrier-protein] synthase III of Paracidovorax citrulli (strain AAC00-1) (Acidovorax citrulli).